We begin with the raw amino-acid sequence, 635 residues long: Sodium- and chloride-dependent creatine transporter 1 (635 aa).

Residues 1 to 11 (MANKSTENGIY) are compositionally biased toward polar residues. Residues 1-27 (MANKSTENGIYSVSGEEKKGPLIAPGP) form a disordered region. The Cytoplasmic segment spans residues 1 to 60 (MANKSTENGIYSVSGEEKKGPLIAPGPDGAPAKGDGPAALGAPGSLLAVPPRETWTRQMD). Residues 61 to 81 (FIMSCVGFAVGLGNVWRFPYL) form a helical membrane-spanning segment. Residues 82 to 87 (CYKNGG) lie on the Extracellular side of the membrane. A helical membrane pass occupies residues 88-108 (GVFLIPYILIALIGGIPIFFL). Residues 109–138 (EISLGQFMKAGSINVWNICPLFKGLGYASM) lie on the Cytoplasmic side of the membrane. A helical transmembrane segment spans residues 139-159 (VIVFYCNTYYIMVLAWGFYYL). Over 160–230 (VKSFTTTLPW…LSEGLEVPGA (71 aa)) the chain is Extracellular. 2 N-linked (GlcNAc...) asparagine glycosylation sites follow: N192 and N197. Residues 231–251 (LNWEVTLCLLTCWVLVYFCVW) traverse the membrane as a helical segment. At 252 to 269 (KGVKSTGKIVYFTATFPY) the chain is on the cytoplasmic side. The chain crosses the membrane as a helical span at residues 270–290 (VVLVVLLVRGVLLPGALDGII). Topologically, residues 291–304 (YYLKPDWSKLASPQ) are extracellular. A helical transmembrane segment spans residues 305–325 (VWIDAGTQIFFSYAIGLGALT). The Cytoplasmic portion of the chain corresponds to 326–341 (ALGSYNRFNNNCYKDA). The helical transmembrane segment at 342 to 362 (IILALINSGTSFFAGFVVFSI) threads the bilayer. Topologically, residues 363–394 (LGFMATEQGVHISKVAESGPGLAFIAYPRAVT) are extracellular. The chain crosses the membrane as a helical span at residues 395-415 (LMPVAPLWAALFFFMLLLLGL). Residues 416 to 444 (DSQFVGVEGFITGLLDLLPASYYFRFQRE) lie on the Cytoplasmic side of the membrane. Residues 445 to 465 (ISVALCCTICFVIDLSMVTDG) form a helical membrane-spanning segment. Residues 466–479 (GMYVFQLFDYYSAS) lie on the Extracellular side of the membrane. A helical membrane pass occupies residues 480 to 500 (GTTLLWQAFWECVVVAWVYGA). The Cytoplasmic segment spans residues 501-520 (DRFMDDVACMIGYRPCPWMK). A helical membrane pass occupies residues 521–541 (WCWSFFTPLVCMGIFIFNVVY). Over 542-560 (HEPLVYNNTYVYPWWGEAV) the chain is Extracellular. Residue N548 is glycosylated (N-linked (GlcNAc...) asparagine). Residues 561–581 (GWAFALSSMLCVPLHLLGCLL) form a helical membrane-spanning segment. Over 582-635 (RAKGTMAERWQHLTQPIWGLHHLEYRAQDSDVRGLTTLTPVSESSKVVVVESVM) the chain is Cytoplasmic. Phosphothreonine is present on residues T617 and T620. A Phosphoserine modification is found at S623.

The protein belongs to the sodium:neurotransmitter symporter (SNF) (TC 2.A.22) family. SLC6A8 subfamily. In terms of processing, glycosylated.

It localises to the cell membrane. The protein resides in the apical cell membrane. It carries out the reaction creatine(out) + chloride(out) + 2 Na(+)(out) = creatine(in) + chloride(in) + 2 Na(+)(in). Its function is as follows. Creatine:sodium symporter which mediates the uptake of creatine. Plays an important role in supplying creatine to the brain via the blood-brain barrier. The protein is Sodium- and chloride-dependent creatine transporter 1 (SLC6A8) of Bos taurus (Bovine).